Reading from the N-terminus, the 256-residue chain is Imidazole glycerol phosphate synthase subunit HisF (256 aa).

Active-site residues include aspartate 12 and aspartate 131.

The protein belongs to the HisA/HisF family. As to quaternary structure, heterodimer of HisH and HisF.

It is found in the cytoplasm. It catalyses the reaction 5-[(5-phospho-1-deoxy-D-ribulos-1-ylimino)methylamino]-1-(5-phospho-beta-D-ribosyl)imidazole-4-carboxamide + L-glutamine = D-erythro-1-(imidazol-4-yl)glycerol 3-phosphate + 5-amino-1-(5-phospho-beta-D-ribosyl)imidazole-4-carboxamide + L-glutamate + H(+). It participates in amino-acid biosynthesis; L-histidine biosynthesis; L-histidine from 5-phospho-alpha-D-ribose 1-diphosphate: step 5/9. In terms of biological role, IGPS catalyzes the conversion of PRFAR and glutamine to IGP, AICAR and glutamate. The HisF subunit catalyzes the cyclization activity that produces IGP and AICAR from PRFAR using the ammonia provided by the HisH subunit. The sequence is that of Imidazole glycerol phosphate synthase subunit HisF from Beutenbergia cavernae (strain ATCC BAA-8 / DSM 12333 / CCUG 43141 / JCM 11478 / NBRC 16432 / NCIMB 13614 / HKI 0122).